Consider the following 292-residue polypeptide: Ribosomal RNA small subunit methyltransferase A (292 aa).

Residues Asn29, Leu31, Gly56, Glu77, Asp102, and Asn127 each coordinate S-adenosyl-L-methionine.

The protein belongs to the class I-like SAM-binding methyltransferase superfamily. rRNA adenine N(6)-methyltransferase family. RsmA subfamily.

It localises to the cytoplasm. It catalyses the reaction adenosine(1518)/adenosine(1519) in 16S rRNA + 4 S-adenosyl-L-methionine = N(6)-dimethyladenosine(1518)/N(6)-dimethyladenosine(1519) in 16S rRNA + 4 S-adenosyl-L-homocysteine + 4 H(+). Its function is as follows. Specifically dimethylates two adjacent adenosines (A1518 and A1519) in the loop of a conserved hairpin near the 3'-end of 16S rRNA in the 30S particle. May play a critical role in biogenesis of 30S subunits. The sequence is that of Ribosomal RNA small subunit methyltransferase A from Bacillus licheniformis (strain ATCC 14580 / DSM 13 / JCM 2505 / CCUG 7422 / NBRC 12200 / NCIMB 9375 / NCTC 10341 / NRRL NRS-1264 / Gibson 46).